We begin with the raw amino-acid sequence, 518 residues long: MPNIDLPTLEAFVHAIPQNYKGPGGAVAVVRNGEIVLRHAWGFADLAARKAMTPETRMPICSVSKQFTCAVLLDCIGEPEMLDSALAAYLDQFGDGRPAVRDLCNNQSGLRDYWALTVLCGAAPEGIFLPDQAQNLLRRLKTTHFAPGTHYSYCNGNFRILADLIEQHTGRSLADLLAERIFAPAAMKTAELIPDTALFNECTGYEGDTVHGFLPAINRIHWLGDAGICASLDDMIAWEQFIDRTRHDENGLYRRLSSPQTFADGAPAPYGFGLKFEETGGKRLTGHGGALRGWRCQRWHCADERISTIVMFNFEGNASDAALKMMNAALGIPPAKPVRAQANPGWFGSWLNPETGLVLSLEDAGGGRMKARFGTGPEIMDISGENEAQSSMTTLRRDGDMIHLARKDENLHLAMHRLKGEARQDIAGRYRSDELEADLLLVSEGGAIYGAFEGFLGKSDMYPLYAAGPDVWLLPVQRSMDAPSPGEWKLVFHRDAAGRITGVTVGCWLARGVEYKRL.

The Nucleophile role is filled by Ser62. The Proton donor/acceptor role is filled by Lys65. The tract at residues 477–487 is important for specificity; it reads QRSMDAPSPGE. Substrate is bound at residue Asp481.

Belongs to the peptidase S12 family. In terms of assembly, homodimer.

The enzyme catalyses Release of an N-terminal D-amino acid from a peptide, Xaa-|-Yaa-, in which Xaa is preferably D-Ala, D-Ser or D-Thr. D-amino acid amides and methyl esters also are hydrolyzed, as is glycine amide.. Its activity is regulated as follows. Inhibited by beta-lactam compounds such as 6-aminopenicillic acid, 7-aminocephalosporanic acid, benzylpenicillin and ampicillin. Inhibited by p-chloromercuribenzoate. Its function is as follows. Hydrolyzes N-terminal residues in D-amino acid-containing peptides. This is D-aminopeptidase from Brucella ovis (strain ATCC 25840 / 63/290 / NCTC 10512).